Consider the following 871-residue polypeptide: DNA mismatch repair protein MutS (871 aa).

605–612 (GPNMGGKS) is a binding site for ATP. The tract at residues 791–840 (PQRPTSASVEQPVDSAKTETAATAEEPQQLSLFPTDEETKPKQPTKKERS) is disordered. Over residues 827 to 840 (EETKPKQPTKKERS) the composition is skewed to basic and acidic residues.

This sequence belongs to the DNA mismatch repair MutS family.

Functionally, this protein is involved in the repair of mismatches in DNA. It is possible that it carries out the mismatch recognition step. This protein has a weak ATPase activity. In Shouchella clausii (strain KSM-K16) (Alkalihalobacillus clausii), this protein is DNA mismatch repair protein MutS.